We begin with the raw amino-acid sequence, 267 residues long: Type III pantothenate kinase (267 aa).

6–13 (DVRNTHTT) lines the ATP pocket. 109 to 112 (GADR) is a binding site for substrate. The Proton acceptor role is filled by Asp111. Position 131 (Asp131) interacts with K(+). Ser134 lines the ATP pocket. Thr186 serves as a coordination point for substrate.

It belongs to the type III pantothenate kinase family. As to quaternary structure, homodimer. NH4(+) is required as a cofactor. K(+) serves as cofactor.

Its subcellular location is the cytoplasm. The catalysed reaction is (R)-pantothenate + ATP = (R)-4'-phosphopantothenate + ADP + H(+). It functions in the pathway cofactor biosynthesis; coenzyme A biosynthesis; CoA from (R)-pantothenate: step 1/5. Catalyzes the phosphorylation of pantothenate (Pan), the first step in CoA biosynthesis. The sequence is that of Type III pantothenate kinase from Mycobacterium sp. (strain JLS).